Here is a 390-residue protein sequence, read N- to C-terminus: Complement decay-accelerating factor, GPI-anchored (390 aa).

The signal sequence occupies residues 1 to 34; the sequence is MIRGRAPRTRPSPPPPLLPLLSLSLLLLSPTVRG. 4 consecutive Sushi domains span residues 35–96, 97–160, 161–222, and 223–286; these read DCGP…FCEK, SCVA…FCKK, KSCP…VCTE, and IHCP…RCIE. 8 disulfide bridges follow: Cys36–Cys81, Cys65–Cys94, Cys98–Cys145, Cys129–Cys158, Cys163–Cys204, Cys190–Cys220, Cys225–Cys267, and Cys253–Cys284. The N-linked (GlcNAc...) asparagine glycan is linked to Asn187. Asn262 carries N-linked (GlcNAc...) asparagine glycosylation. Residues 273-362 are disordered; the sequence is DVGQWSSPPP…STDKGEPNTG (90 aa). 2 stretches are compositionally biased toward polar residues: residues 298–319 and 327–344; these read NVPS…VPNP and KPST…VTKT. The GPI-anchor amidated glycine moiety is linked to residue Gly362. The propeptide at 363 to 390 is removed in mature form; that stretch reads GDRYIYGHTCLITLTVLHVMLSLIGYLT.

Belongs to the receptors of complement activation (RCA) family. As to expression, brain, secretory epithelia, skeletal muscle, liver, testes, thymus, spleen and lymph node.

It is found in the cell membrane. Functionally, this protein recognizes C4b and C3b fragments that condense with cell-surface hydroxyl or amino groups when nascent C4b and C3b are locally generated during C4 and c3 activation. Interaction of daf with cell-associated C4b and C3b polypeptides interferes with their ability to catalyze the conversion of C2 and factor B to enzymatically active C2a and Bb and thereby prevents the formation of C4b2a and C3bBb, the amplification convertases of the complement cascade. Inhibits complement activation by destabilizing and preventing the formation of C3 and C5 convertases, which prevents complement damage. In Mus musculus (Mouse), this protein is Complement decay-accelerating factor, GPI-anchored (Cd55).